The chain runs to 571 residues: UvrABC system protein C (571 aa).

The 79-residue stretch at 15–93 folds into the GIY-YIG domain; sequence TSPGVYLWKD…IDRYNPEFNI (79 aa). The UVR domain maps to 184–219; the sequence is NNYINELTNKMHQAANNMQFELALFLRDGLTYLKKL.

Belongs to the UvrC family. Interacts with UvrB in an incision complex.

The protein resides in the cytoplasm. Functionally, the UvrABC repair system catalyzes the recognition and processing of DNA lesions. UvrC both incises the 5' and 3' sides of the lesion. The N-terminal half is responsible for the 3' incision and the C-terminal half is responsible for the 5' incision. The polypeptide is UvrABC system protein C (Mycoplasmopsis bovis (strain ATCC 25523 / DSM 22781 / NCTC 10131 / PG45) (Mycoplasma bovis)).